A 398-amino-acid chain; its full sequence is Putative defective protein IntQ (398 aa).

Residues 51–146 form the Core-binding (CB) domain; the sequence is LTIKELAEKF…NLNAVFQFGV (96 aa). Residues 167–378 form the Tyr recombinase domain; sequence TIPDPLSREE…SENNNAQVAL (212 aa). Catalysis depends on residues Arg-202, Lys-236, Arg-331, and His-354. The active-site O-(3'-phospho-DNA)-tyrosine intermediate is Tyr-364.

This sequence belongs to the 'phage' integrase family.

Integrase is necessary for integration of the phage into the host genome by site-specific recombination. In conjunction with excisionase, integrase is also necessary for excision of the prophage from the host genome. This Escherichia coli (strain K12) protein is Putative defective protein IntQ (intQ).